A 380-amino-acid polypeptide reads, in one-letter code: Cyclohex-1-ene-1-carbonyl-CoA dehydrogenase (380 aa).

The active-site Proton acceptor is D91. FAD is bound by residues L122, A124, T125, S131, and T157. A cyclohex-1-ene-1-carbonyl-CoA-binding site is contributed by S131. S131 is a binding site for cyclohexa-1,5-diene-1-carbonyl-CoA. Cyclohex-1-ene-1-carbonyl-CoA-binding residues include K178, R242, and T363. Cyclohexa-1,5-diene-1-carbonyl-CoA contacts are provided by K178, R242, and T363. Positions 365 and 367 each coordinate FAD. R375 is a binding site for cyclohex-1-ene-1-carbonyl-CoA. R375 lines the cyclohexa-1,5-diene-1-carbonyl-CoA pocket.

This sequence belongs to the acyl-CoA dehydrogenase family. In terms of assembly, homotetramer. It depends on FAD as a cofactor.

It carries out the reaction cyclohex-1-ene-1-carbonyl-CoA + oxidized [electron-transfer flavoprotein] + H(+) = cyclohexa-1,5-diene-1-carbonyl-CoA + reduced [electron-transfer flavoprotein]. Its function is as follows. Acyl-CoA dehydrogenase involved in the anaerobic degradation of cyclohexane carboxylic acid (CHC). Catalyzes the 1,4-dehydrogenation at C3 and C6 of cyclohex-1-ene-1-carbonyl-CoA (CHeneCoA or Ch1CoA) to cyclohexa-1,5-diene-1-carbonyl-CoA (CHdieneCoA or Ch1,5CoA). Also able to catalyze, at a lower rate, the dehydrogenation at C3 and C4 of CHdieneCoA to benzoyl-CoA. The polypeptide is Cyclohex-1-ene-1-carbonyl-CoA dehydrogenase (Geobacter metallireducens (strain ATCC 53774 / DSM 7210 / GS-15)).